Here is a 270-residue protein sequence, read N- to C-terminus: Cytochrome c oxidase subunit 3 (270 aa).

The next 7 helical transmembrane spans lie at 22-42, 46-66, 88-108, 128-148, 168-188, 205-225, and 248-268; these read PWPIVVSFSLLSLALSLGLTM, IGEMYLVNLALLVVLGSGVLW, INIGFLLFVLSEVLIFSALFW, VGITAVQPTELPLLNTIILLA, SLSGLLITTWLIIIFVICQYI, VFFAGTGLHFLHMVMLAIMLA, and IIYLHVLDVIWLFLYIVFYWW.

This sequence belongs to the cytochrome c oxidase subunit 3 family. As to quaternary structure, component of the cytochrome c oxidase (complex IV, CIV), a multisubunit enzyme composed of a catalytic core of 3 subunits and several supernumerary subunits. The complex exists as a monomer or a dimer and forms supercomplexes (SCs) in the inner mitochondrial membrane with ubiquinol-cytochrome c oxidoreductase (cytochrome b-c1 complex, complex III, CIII).

It is found in the mitochondrion inner membrane. The catalysed reaction is 4 Fe(II)-[cytochrome c] + O2 + 8 H(+)(in) = 4 Fe(III)-[cytochrome c] + 2 H2O + 4 H(+)(out). Functionally, component of the cytochrome c oxidase, the last enzyme in the mitochondrial electron transport chain which drives oxidative phosphorylation. The respiratory chain contains 3 multisubunit complexes succinate dehydrogenase (complex II, CII), ubiquinol-cytochrome c oxidoreductase (cytochrome b-c1 complex, complex III, CIII) and cytochrome c oxidase (complex IV, CIV), that cooperate to transfer electrons derived from NADH and succinate to molecular oxygen, creating an electrochemical gradient over the inner membrane that drives transmembrane transport and the ATP synthase. Cytochrome c oxidase is the component of the respiratory chain that catalyzes the reduction of oxygen to water. Electrons originating from reduced cytochrome c in the intermembrane space (IMS) are transferred via the dinuclear copper A center (CU(A)) of subunit 2 and heme A of subunit 1 to the active site in subunit 1, a binuclear center (BNC) formed by heme A3 and copper B (CU(B)). The BNC reduces molecular oxygen to 2 water molecules using 4 electrons from cytochrome c in the IMS and 4 protons from the mitochondrial matrix. The polypeptide is Cytochrome c oxidase subunit 3 (COX3) (Vanderwaltozyma polyspora (strain ATCC 22028 / DSM 70294 / BCRC 21397 / CBS 2163 / NBRC 10782 / NRRL Y-8283 / UCD 57-17) (Kluyveromyces polysporus)).